Here is a 557-residue protein sequence, read N- to C-terminus: Acid-sensing ion channel 1B (557 aa).

Residues 1-98 (MVRITCTISF…SIRQGLWALV (98 aa)) are Cytoplasmic-facing. Residues 36–45 (KDGEQGKYQE) are compositionally biased toward basic and acidic residues. Residues 36-57 (KDGEQGKYQEEGDDPDAYDGPE) form a disordered region. Positions 46–57 (EGDDPDAYDGPE) are enriched in acidic residues. The helical transmembrane segment at 99-115 (FLLAISMFLLQVVDRVI) threads the bilayer. The Extracellular segment spans residues 116 to 460 (YYLQYDYVTL…ETIEQKKAYE (345 aa)). Asparagine 133 and asparagine 194 each carry an N-linked (GlcNAc...) asparagine glycan. 7 disulfides stabilise this stretch: cysteine 142–cysteine 229, cysteine 207–cysteine 214, cysteine 325–cysteine 400, cysteine 343–cysteine 396, cysteine 347–cysteine 394, cysteine 356–cysteine 378, and cysteine 358–cysteine 370. N-linked (GlcNAc...) asparagine glycosylation is found at asparagine 401 and asparagine 428. The chain crosses the membrane as a discontinuously helical span at residues 461–491 (LAGLLGDIGGQMGLFIGASILTILELFDYLY). Residues 477–479 (GAS) carry the GAS motif; ion selectivity filter motif. The Cytoplasmic segment spans residues 492 to 557 (EVIKFKLCRC…GQGNFEDFTC (66 aa)).

Belongs to the amiloride-sensitive sodium channel (TC 1.A.6) family. ASIC1 subfamily. In terms of assembly, homotrimer. Heterotrimer; with other ASIC proteins producing channel with different properties. In terms of tissue distribution, expressed in central nervous system.

The protein localises to the cell membrane. Its subcellular location is the postsynaptic cell membrane. The protein resides in the cell projection. It is found in the dendrite. The catalysed reaction is Na(+)(in) = Na(+)(out). The enzyme catalyses K(+)(in) = K(+)(out). It catalyses the reaction Li(+)(in) = Li(+)(out). It carries out the reaction Ca(2+)(in) = Ca(2+)(out). Its activity is regulated as follows. Inhibited by the diuretic drug amiloride. In terms of biological role, forms voltage-independent, pH-gated trimeric sodium channels that act as postsynaptic excitatory receptors in the nervous system, playing a crucial role in regulating synaptic plasticity, learning, and memory. Upon extracellular pH drop this channel elicits transient, fast activating, and completely desensitizing inward currents. Displays high selectivity for sodium ions but can also permit the permeation of other cations. This chain is Acid-sensing ion channel 1B (asic1b), found in Danio rerio (Zebrafish).